An 866-amino-acid polypeptide reads, in one-letter code: Leucine--tRNA ligase (866 aa).

The short motif at 42 to 52 (PYPSGKLHMGH) is the 'HIGH' region element. Residues 630 to 634 (KMSKS) carry the 'KMSKS' region motif. Lys633 is an ATP binding site.

This sequence belongs to the class-I aminoacyl-tRNA synthetase family.

The protein localises to the cytoplasm. The catalysed reaction is tRNA(Leu) + L-leucine + ATP = L-leucyl-tRNA(Leu) + AMP + diphosphate. This chain is Leucine--tRNA ligase, found in Laribacter hongkongensis (strain HLHK9).